Here is a 610-residue protein sequence, read N- to C-terminus: UvrABC system protein C (610 aa).

The GIY-YIG domain maps to 16–94 (SQPGVYRMYD…IKLYQPRYNV (79 aa)). Residues 204–239 (DQVLTQLIARMEKASQDLAFEEAARIRDQIQAVRRV) form the UVR domain.

It belongs to the UvrC family. As to quaternary structure, interacts with UvrB in an incision complex.

The protein localises to the cytoplasm. Its function is as follows. The UvrABC repair system catalyzes the recognition and processing of DNA lesions. UvrC both incises the 5' and 3' sides of the lesion. The N-terminal half is responsible for the 3' incision and the C-terminal half is responsible for the 5' incision. In Salmonella dublin (strain CT_02021853), this protein is UvrABC system protein C.